A 341-amino-acid polypeptide reads, in one-letter code: MEVTDFDFYLPEELIAQKPLEQRDEGRLMVLDKKTGKVCHKIFKDIVYYLNPGDCVVLNDTRVLPARLIGVREDTMGKIEFLLLKRRDNFTWETLVKPGRRAKVGNRFNFGSGQLKAEVVSINEDGNRIVRFEYNGVFEEILDKLGQIPLPPYIKEKLENKELYQTVYSKEEGSAAAPTAGLHFTEELLRELREKGVNLAFLTLHVGLGTFRPVKVENIEDHAMHSEFYSMSKETADMINAAKESGHSVISVGTTSCRTLETIGDENGRVKEQSGWTDIFIYPGYKYKVVDKLITNFHLPKSTLIMLVSAFYGRENTLHAYNVAVKEKYRFFSFGDAMFIK.

The protein belongs to the QueA family. Monomer.

Its subcellular location is the cytoplasm. The enzyme catalyses 7-aminomethyl-7-carbaguanosine(34) in tRNA + S-adenosyl-L-methionine = epoxyqueuosine(34) in tRNA + adenine + L-methionine + 2 H(+). The protein operates within tRNA modification; tRNA-queuosine biosynthesis. Transfers and isomerizes the ribose moiety from AdoMet to the 7-aminomethyl group of 7-deazaguanine (preQ1-tRNA) to give epoxyqueuosine (oQ-tRNA). The protein is S-adenosylmethionine:tRNA ribosyltransferase-isomerase of Clostridium kluyveri (strain NBRC 12016).